Here is a 300-residue protein sequence, read N- to C-terminus: Mycothiol acetyltransferase (300 aa).

2 consecutive N-acetyltransferase domains span residues isoleucine 4–threonine 140 and valine 151–aspartate 300. Residue aspartate 36 coordinates 1D-myo-inositol 2-(L-cysteinylamino)-2-deoxy-alpha-D-glucopyranoside. Leucine 79–valine 81 contributes to the acetyl-CoA binding site. Residues glutamate 178, lysine 219, and glutamate 227 each coordinate 1D-myo-inositol 2-(L-cysteinylamino)-2-deoxy-alpha-D-glucopyranoside. Acetyl-CoA is bound at residue valine 231–valine 233. Residue tyrosine 269 participates in 1D-myo-inositol 2-(L-cysteinylamino)-2-deoxy-alpha-D-glucopyranoside binding. Asparagine 274–lysine 279 provides a ligand contact to acetyl-CoA.

This sequence belongs to the acetyltransferase family. MshD subfamily. Monomer.

The catalysed reaction is 1D-myo-inositol 2-(L-cysteinylamino)-2-deoxy-alpha-D-glucopyranoside + acetyl-CoA = mycothiol + CoA + H(+). Its function is as follows. Catalyzes the transfer of acetyl from acetyl-CoA to desacetylmycothiol (Cys-GlcN-Ins) to form mycothiol. The protein is Mycothiol acetyltransferase of Mycobacterium sp. (strain MCS).